A 364-amino-acid chain; its full sequence is D-alanine--D-alanine ligase (364 aa).

The region spanning 145–354 is the ATP-grasp domain; the sequence is KMAFEQAGLP…FPELVDKLVQ (210 aa). An ATP-binding site is contributed by 181-236; sequence EASLGYPCFVKPANLGSSVGISKVRSRQELEDALDNAANYDRRIIIEAGVAAREVE. Mg(2+)-binding residues include aspartate 307, glutamate 321, and asparagine 323.

Belongs to the D-alanine--D-alanine ligase family. Mg(2+) serves as cofactor. It depends on Mn(2+) as a cofactor.

Its subcellular location is the cytoplasm. The enzyme catalyses 2 D-alanine + ATP = D-alanyl-D-alanine + ADP + phosphate + H(+). The protein operates within cell wall biogenesis; peptidoglycan biosynthesis. Its function is as follows. Cell wall formation. This chain is D-alanine--D-alanine ligase, found in Nostoc sp. (strain PCC 7120 / SAG 25.82 / UTEX 2576).